A 207-amino-acid chain; its full sequence is Ribonuclease HII (207 aa).

The region spanning 18-206 (EFIVGVDEVG…VKNILQLLEK (189 aa)) is the RNase H type-2 domain. A divalent metal cation is bound by residues D24, E25, and D115.

Belongs to the RNase HII family. The cofactor is Mn(2+). Requires Mg(2+) as cofactor.

The protein resides in the cytoplasm. It catalyses the reaction Endonucleolytic cleavage to 5'-phosphomonoester.. Functionally, endonuclease that specifically degrades the RNA of RNA-DNA hybrids. In Hydrogenovibrio crunogenus (strain DSM 25203 / XCL-2) (Thiomicrospira crunogena), this protein is Ribonuclease HII.